Here is a 101-residue protein sequence, read N- to C-terminus: Small ribosomal subunit protein uS14 (101 aa).

This sequence belongs to the universal ribosomal protein uS14 family. Part of the 30S ribosomal subunit. Contacts proteins S3 and S10.

Functionally, binds 16S rRNA, required for the assembly of 30S particles and may also be responsible for determining the conformation of the 16S rRNA at the A site. This Rhizobium johnstonii (strain DSM 114642 / LMG 32736 / 3841) (Rhizobium leguminosarum bv. viciae) protein is Small ribosomal subunit protein uS14.